The primary structure comprises 196 residues: Probable malonic semialdehyde reductase RutE (196 aa).

Belongs to the nitroreductase family. HadB/RutE subfamily. FMN serves as cofactor.

The catalysed reaction is 3-hydroxypropanoate + NADP(+) = 3-oxopropanoate + NADPH + H(+). Functionally, may reduce toxic product malonic semialdehyde to 3-hydroxypropionic acid, which is excreted. In Shigella flexneri serotype 5b (strain 8401), this protein is Probable malonic semialdehyde reductase RutE.